The primary structure comprises 88 residues: Small ribosomal subunit protein bS20 (88 aa).

The tract at residues 1-25 (MANSPQAKKRARQNERRAEVNKARR) is disordered. Basic and acidic residues predominate over residues 12–22 (RQNERRAEVNK).

The protein belongs to the bacterial ribosomal protein bS20 family.

Functionally, binds directly to 16S ribosomal RNA. In Dinoroseobacter shibae (strain DSM 16493 / NCIMB 14021 / DFL 12), this protein is Small ribosomal subunit protein bS20.